The following is a 193-amino-acid chain: Ion-translocating oxidoreductase complex subunit A (193 aa).

A run of 6 helical transmembrane segments spans residues 5–25 (LLLF…FLGL), 39–59 (IGMG…AWMV), 62–82 (FILL…LVIA), 102–122 (LLGI…VALL), 134–154 (AVYG…FAAI), and 171–191 (SIAL…TGLV).

It belongs to the NqrDE/RnfAE family. The complex is composed of six subunits: RnfA, RnfB, RnfC, RnfD, RnfE and RnfG.

The protein resides in the cell inner membrane. Its function is as follows. Part of a membrane-bound complex that couples electron transfer with translocation of ions across the membrane. In Yersinia enterocolitica serotype O:8 / biotype 1B (strain NCTC 13174 / 8081), this protein is Ion-translocating oxidoreductase complex subunit A.